Reading from the N-terminus, the 272-residue chain is MSIYTNSKPWTVPALAEAKRNGSKIVMLTAYDAGFARILDANGVDLILVGDSLGMVVQGHDSTLPVSVHDMVYHTACVARGVRHAMLVVDLPFQADASPERALEAATALLRVGAQMIKIEGAGHKLEVISYLVEREIPVCSHLGLTPQSVLRFGGYKVQGRGEEAGGRLRAEARAAVEAGATLLLLECVPSQLAAQITTDASVPTIGIGAGAGCDGQVLVLHDLLGLDSGHPRPKFVKDFLAHGGSVAGAVRAYANAVRDGSFPDVEHTYTS.

2 residues coordinate Mg(2+): Asp-51 and Asp-90. 3-methyl-2-oxobutanoate is bound by residues 51 to 52 (DS), Asp-90, and Lys-118. Glu-120 is a Mg(2+) binding site. Glu-187 functions as the Proton acceptor in the catalytic mechanism.

It belongs to the PanB family. As to quaternary structure, homodecamer; pentamer of dimers. Mg(2+) is required as a cofactor.

It localises to the cytoplasm. The enzyme catalyses 3-methyl-2-oxobutanoate + (6R)-5,10-methylene-5,6,7,8-tetrahydrofolate + H2O = 2-dehydropantoate + (6S)-5,6,7,8-tetrahydrofolate. The protein operates within cofactor biosynthesis; (R)-pantothenate biosynthesis; (R)-pantoate from 3-methyl-2-oxobutanoate: step 1/2. Catalyzes the reversible reaction in which hydroxymethyl group from 5,10-methylenetetrahydrofolate is transferred onto alpha-ketoisovalerate to form ketopantoate. In Xylella fastidiosa (strain M23), this protein is 3-methyl-2-oxobutanoate hydroxymethyltransferase.